A 1829-amino-acid polypeptide reads, in one-letter code: Protein TIC 214 (1829 aa).

6 helical membrane passes run 18–38, 67–87, 90–110, 127–147, 174–194, and 224–244; these read IINSVVVVGLYYGFMTTFSIG, FIAGQLMMFISIYYAPLHLAL, PHTITVLALPYLLFHFFWNNP, LSIQCVFLNNLIFQLFNHFLL, FVGWLIGHILFMKWVGLVLVW, and IFSILLFITCIYYLGRIPSPI. Positions 260 to 272 are enriched in basic and acidic residues; it reads RDVEIEKTFERGG. The tract at residues 260–301 is disordered; that stretch reads RDVEIEKTFERGGTKQGQEVSAEEDPSPSLFSEEKEDPDKIE.

The protein belongs to the TIC214 family. Part of the Tic complex.

The protein localises to the plastid. Its subcellular location is the chloroplast inner membrane. Involved in protein precursor import into chloroplasts. May be part of an intermediate translocation complex acting as a protein-conducting channel at the inner envelope. This Citrus sinensis (Sweet orange) protein is Protein TIC 214.